Here is a 160-residue protein sequence, read N- to C-terminus: Cytochrome b6-f complex subunit 4 (160 aa).

Transmembrane regions (helical) follow at residues 36 to 56, 95 to 115, and 131 to 151; these read LLYV…ALAV, LLGV…PFIE, and TVFL…ALPL.

It belongs to the cytochrome b family. PetD subfamily. As to quaternary structure, the 4 large subunits of the cytochrome b6-f complex are cytochrome b6, subunit IV (17 kDa polypeptide, PetD), cytochrome f and the Rieske protein, while the 4 small subunits are PetG, PetL, PetM and PetN. The complex functions as a dimer.

Its subcellular location is the cellular thylakoid membrane. Its function is as follows. Component of the cytochrome b6-f complex, which mediates electron transfer between photosystem II (PSII) and photosystem I (PSI), cyclic electron flow around PSI, and state transitions. The chain is Cytochrome b6-f complex subunit 4 from Desmonostoc sp. (strain PCC 7906) (Nostoc sp. (strain PCC 7906)).